The primary structure comprises 591 residues: Aspartate--tRNA(Asp/Asn) ligase (591 aa).

Glu176 provides a ligand contact to L-aspartate. The tract at residues 200 to 203 is aspartate; sequence QLFK. Arg222 provides a ligand contact to L-aspartate. Residues 222 to 224 and Gln231 each bind ATP; that span reads RDE. His450 is an L-aspartate binding site. Residue Glu484 participates in ATP binding. Arg491 lines the L-aspartate pocket. 536–539 contributes to the ATP binding site; the sequence is GLDR.

Belongs to the class-II aminoacyl-tRNA synthetase family. Type 1 subfamily. Homodimer.

It is found in the cytoplasm. It carries out the reaction tRNA(Asx) + L-aspartate + ATP = L-aspartyl-tRNA(Asx) + AMP + diphosphate. Its function is as follows. Aspartyl-tRNA synthetase with relaxed tRNA specificity since it is able to aspartylate not only its cognate tRNA(Asp) but also tRNA(Asn). Reaction proceeds in two steps: L-aspartate is first activated by ATP to form Asp-AMP and then transferred to the acceptor end of tRNA(Asp/Asn). This is Aspartate--tRNA(Asp/Asn) ligase from Bacillus cereus (strain B4264).